Reading from the N-terminus, the 347-residue chain is Heme A synthase (347 aa).

Helical transmembrane passes span 14–34, 95–115, 125–145, 166–186, 198–218, 260–280, 289–309, and 311–331; these read VKVW…VGGI, YFHR…FLYF, LIVN…MGWL, LLLA…AVIL, LIFY…SLVA, FIHE…LLIL, LLLV…IYNV, and IALA…NTYL. Heme is bound at residue H262. Residue H317 participates in heme binding.

Belongs to the COX15/CtaA family. Type 2 subfamily. In terms of assembly, interacts with CtaB. Heme b is required as a cofactor.

It is found in the cell membrane. The enzyme catalyses Fe(II)-heme o + 2 A + H2O = Fe(II)-heme a + 2 AH2. It participates in porphyrin-containing compound metabolism; heme A biosynthesis; heme A from heme O: step 1/1. In terms of biological role, catalyzes the conversion of heme O to heme A by two successive hydroxylations of the methyl group at C8. The first hydroxylation forms heme I, the second hydroxylation results in an unstable dihydroxymethyl group, which spontaneously dehydrates, resulting in the formyl group of heme A. In Ehrlichia canis (strain Jake), this protein is Heme A synthase.